A 307-amino-acid polypeptide reads, in one-letter code: Pseudouridine-5'-phosphate glycosidase (307 aa).

The Proton donor role is filled by Glu-25. Lys-86 and Val-106 together coordinate substrate. Asp-138 is a Mn(2+) binding site. Residue Ser-140–Asp-142 coordinates substrate. The active-site Nucleophile is Lys-159.

It belongs to the pseudouridine-5'-phosphate glycosidase family. As to quaternary structure, homotrimer. The cofactor is Mn(2+).

It carries out the reaction D-ribose 5-phosphate + uracil = psi-UMP + H2O. In terms of biological role, catalyzes the reversible cleavage of pseudouridine 5'-phosphate (PsiMP) to ribose 5-phosphate and uracil. Functions biologically in the cleavage direction, as part of a pseudouridine degradation pathway. This Caldanaerobacter subterraneus subsp. tengcongensis (strain DSM 15242 / JCM 11007 / NBRC 100824 / MB4) (Thermoanaerobacter tengcongensis) protein is Pseudouridine-5'-phosphate glycosidase.